The sequence spans 546 residues: Thermolysin (546 aa).

Positions Met1 to Ala25 are cleaved as a signal peptide. The propeptide at Lys26–Val228 is activation peptide. Ca(2+) contacts are provided by Asp287, Asp289, Gln291, and Asp368. His372 provides a ligand contact to Zn(2+). Glu373 is an active-site residue. 2 residues coordinate Zn(2+): His376 and Glu396. Residues Glu407, Asn413, Asp415, Glu417, Glu420, Tyr423, Thr424, Ile427, and Asp430 each contribute to the Ca(2+) site. Residue His461 is the Proton donor of the active site.

The protein belongs to the peptidase M4 family. It depends on Ca(2+) as a cofactor. The cofactor is Zn(2+).

It localises to the secreted. The enzyme catalyses Preferential cleavage: Xaa-|-Leu &gt; Xaa-|-Phe.. Functionally, extracellular zinc metalloprotease. The sequence is that of Thermolysin from Alicyclobacillus acidocaldarius subsp. acidocaldarius (Bacillus acidocaldarius).